The following is a 223-amino-acid chain: Capsid protein (223 aa).

Residues 1 to 19 (MDDETKKLKNKNKETKEGD) are compositionally biased toward basic and acidic residues. Residues 1–21 (MDDETKKLKNKNKETKEGDDV) are disordered.

Belongs to the closteroviridae capsid protein family. Consists of at least two size variants, CP1 and CP2, which result of post-translational proteolysis at sites approximately 12 to 15 and 26 AA from the N-terminus respectively.

It localises to the virion. The sequence is that of Capsid protein from Citrus tristeza virus (isolate T36) (CTV).